A 491-amino-acid polypeptide reads, in one-letter code: Nucleoporin NUP42 (491 aa).

The C3H1-type zinc-finger motif lies at 1-25 (MAICNFFLQGRCRYGEKCWNEHPRG). 2 disordered regions span residues 23–82 (PRGG…SQRY) and 92–111 (TTWI…SGFG). The segment covering 33–64 (RYQSQNRYQEQSRYQEQSRYPEQSRYPEQNRY) has biased composition (polar residues). FG repeat units follow at residues 110–111 (FG), 259–260 (FG), 302–303 (FG), 312–313 (FG), 333–334 (FG), 342–343 (FG), 363–364 (FG), 375–376 (FG), 379–380 (FG), and 410–411 (FG).

In terms of assembly, probable component of the nuclear pore complex (NPC).

The protein localises to the nucleus. It localises to the nuclear pore complex. It is found in the nucleus membrane. Required for the export of mRNAs containing poly(A) tails from the nucleus into the cytoplasm. The chain is Nucleoporin NUP42 (nup42) from Xenopus laevis (African clawed frog).